Here is a 110-residue protein sequence, read N- to C-terminus: Small ribosomal subunit protein uS10 (110 aa).

This sequence belongs to the universal ribosomal protein uS10 family. In terms of assembly, part of the 30S ribosomal subunit.

In terms of biological role, involved in the binding of tRNA to the ribosomes. This is Small ribosomal subunit protein uS10 from Ehrlichia ruminantium (strain Gardel).